Consider the following 112-residue polypeptide: Large ribosomal subunit protein uL22 (112 aa).

Belongs to the universal ribosomal protein uL22 family. In terms of assembly, part of the 50S ribosomal subunit.

In terms of biological role, this protein binds specifically to 23S rRNA; its binding is stimulated by other ribosomal proteins, e.g. L4, L17, and L20. It is important during the early stages of 50S assembly. It makes multiple contacts with different domains of the 23S rRNA in the assembled 50S subunit and ribosome. The globular domain of the protein is located near the polypeptide exit tunnel on the outside of the subunit, while an extended beta-hairpin is found that lines the wall of the exit tunnel in the center of the 70S ribosome. The sequence is that of Large ribosomal subunit protein uL22 from Anaplasma marginale (strain Florida).